A 373-amino-acid polypeptide reads, in one-letter code: NAD(P)H-quinone oxidoreductase subunit 1 (373 aa).

8 consecutive transmembrane segments (helical) span residues 28–48 (LLWL…GVLV), 98–118 (LLFT…WLII), 129–149 (VGVG…GLLM), 167–187 (AAQS…IVMM), 205–225 (ILSW…ICAL), 267–287 (VLSA…PIPV), 309–329 (SVGI…AILL), and 348–368 (FLLP…LAFP).

The protein belongs to the complex I subunit 1 family. In terms of assembly, NDH-1 is composed of at least 11 different subunits.

The protein localises to the cellular thylakoid membrane. It catalyses the reaction a plastoquinone + NADH + (n+1) H(+)(in) = a plastoquinol + NAD(+) + n H(+)(out). It carries out the reaction a plastoquinone + NADPH + (n+1) H(+)(in) = a plastoquinol + NADP(+) + n H(+)(out). NDH-1 shuttles electrons from an unknown electron donor, via FMN and iron-sulfur (Fe-S) centers, to quinones in the respiratory and/or the photosynthetic chain. The immediate electron acceptor for the enzyme in this species is believed to be plastoquinone. Couples the redox reaction to proton translocation, and thus conserves the redox energy in a proton gradient. The sequence is that of NAD(P)H-quinone oxidoreductase subunit 1 from Parasynechococcus marenigrum (strain WH8102).